Reading from the N-terminus, the 160-residue chain is Large ribosomal subunit protein eL21 (160 aa).

2 stretches are compositionally biased toward basic and acidic residues: residues 112–123 (NDQKKKEAKEKG) and 136–146 (REAHFVRTNGK). The tract at residues 112–146 (NDQKKKEAKEKGTWVQLNGQPAPPREAHFVRTNGK) is disordered.

This sequence belongs to the eukaryotic ribosomal protein eL21 family. As to quaternary structure, component of the large ribosomal subunit.

It is found in the cytoplasm. Its subcellular location is the cytosol. The protein localises to the endoplasmic reticulum. Its function is as follows. Component of the large ribosomal subunit. The ribosome is a large ribonucleoprotein complex responsible for the synthesis of proteins in the cell. In Rattus norvegicus (Rat), this protein is Large ribosomal subunit protein eL21 (Rpl21).